The sequence spans 206 residues: Small ribosomal subunit protein uS7 (206 aa).

It belongs to the universal ribosomal protein uS7 family. In terms of assembly, component of the small ribosomal subunit.

The protein localises to the cytoplasm. Functionally, component of the small ribosomal subunit. The ribosome is a large ribonucleoprotein complex responsible for the synthesis of proteins in the cell. The polypeptide is Small ribosomal subunit protein uS7 (Entamoeba histolytica (strain ATCC 30459 / HM-1:IMSS / ABRM)).